Consider the following 160-residue polypeptide: Small ribosomal subunit protein uS7B (160 aa).

This sequence belongs to the universal ribosomal protein uS7 family. In terms of assembly, part of the 30S ribosomal subunit. Contacts proteins S9 and S11.

One of the primary rRNA binding proteins, it binds directly to 16S rRNA where it nucleates assembly of the head domain of the 30S subunit. Is located at the subunit interface close to the decoding center, probably blocks exit of the E-site tRNA. The polypeptide is Small ribosomal subunit protein uS7B (Aquifex aeolicus (strain VF5)).